A 601-amino-acid chain; its full sequence is Elongation factor 4 (601 aa).

The region spanning 7-189 (RNIRNFSIIA…AIVHRIPPPK (183 aa)) is the tr-type G domain. Residues 19 to 24 (DHGKST) and 136 to 139 (NKID) contribute to the GTP site.

This sequence belongs to the TRAFAC class translation factor GTPase superfamily. Classic translation factor GTPase family. LepA subfamily.

It localises to the cell inner membrane. It catalyses the reaction GTP + H2O = GDP + phosphate + H(+). Functionally, required for accurate and efficient protein synthesis under certain stress conditions. May act as a fidelity factor of the translation reaction, by catalyzing a one-codon backward translocation of tRNAs on improperly translocated ribosomes. Back-translocation proceeds from a post-translocation (POST) complex to a pre-translocation (PRE) complex, thus giving elongation factor G a second chance to translocate the tRNAs correctly. Binds to ribosomes in a GTP-dependent manner. In Xanthomonas campestris pv. campestris (strain 8004), this protein is Elongation factor 4.